A 910-amino-acid polypeptide reads, in one-letter code: Putative coatomer subunit beta'-3 (910 aa).

9 WD repeats span residues 13–52, 55–94, 97–136, 140–180, 183–224, 227–266, 269–309, 351–393, and 461–501; these read QRSERAKSVDLHPTEPWILSSLYSGSVCIWNYQTQTMVKS, VTELPVRSSKFITRKQWVVAGADDMFIRVYNYNTMDKVKV, AHTDYIRCVAVHPTQPFVLSSSDDMLIKLWDWDKGWMCTQ, GHSH…PNFT, GHSK…CVQT, GHAHNVSAVCFHPELPIILTGSEDGTVRLWHSTTYRLENT, YGLE…ASMD, TCDL…GSAL, and RIDV…SHLD. The segment covering 865–884 has biased composition (acidic residues); that stretch reads ENGVEESQEDAVEVDVEADG. The segment at 865-910 is disordered; it reads ENGVEESQEDAVEVDVEADGSTDGTVLVNGNDTEEQWGTNNEESLA. The segment covering 886-910 has biased composition (polar residues); that stretch reads TDGTVLVNGNDTEEQWGTNNEESLA.

The protein belongs to the WD repeat COPB2 family. As to quaternary structure, oligomeric complex that consists of at least the alpha, beta, beta', gamma, delta, epsilon and zeta subunits.

The protein localises to the cytoplasm. The protein resides in the golgi apparatus membrane. Its subcellular location is the cytoplasmic vesicle. It is found in the COPI-coated vesicle membrane. In terms of biological role, the coatomer is a cytosolic protein complex that binds to dilysine motifs and reversibly associates with Golgi non-clathrin-coated vesicles, which further mediate biosynthetic protein transport from the ER, via the Golgi up to the trans Golgi network. Coatomer complex is required for budding from Golgi membranes, and is essential for the retrograde Golgi-to-ER transport of dilysine-tagged proteins. This is Putative coatomer subunit beta'-3 from Oryza sativa subsp. japonica (Rice).